The chain runs to 475 residues: Integrator complex subunit 15 (475 aa).

A disordered region spans residues 402–444; it reads YPHIHPGRPSPLSPHSPHQSTLSSPHSPHTVLTAHPTHPALAP. Low complexity predominate over residues 416 to 430; that stretch reads HSPHQSTLSSPHSPH.

The protein belongs to the Integrator subunit 15 family. In terms of assembly, component of the Integrator complex, composed of core subunits INTS1, INTS2, INTS3, INTS4, INTS5, INTS6, INTS7, INTS8, INTS9/RC74, INTS10, INTS11/CPSF3L, INTS12, INTS13, INTS14 and INTS15. The core complex associates with protein phosphatase 2A subunits PPP2CA and PPP2R1A, to form the Integrator-PP2A (INTAC) complex. INTS15 is part of the tail subcomplex, composed of INTS10, INTS13, INTS14 and INTS15.

The protein localises to the nucleus. The protein resides in the chromosome. Its function is as follows. Component of the integrator complex, a multiprotein complex that terminates RNA polymerase II (Pol II) transcription in the promoter-proximal region of genes. The integrator complex provides a quality checkpoint during transcription elongation by driving premature transcription termination of transcripts that are unfavorably configured for transcriptional elongation: the complex terminates transcription by (1) catalyzing dephosphorylation of the C-terminal domain (CTD) of Pol II subunit POLR2A/RPB1 and SUPT5H/SPT5, (2) degrading the exiting nascent RNA transcript via endonuclease activity and (3) promoting the release of Pol II from bound DNA. The integrator complex is also involved in terminating the synthesis of non-coding Pol II transcripts, such as enhancer RNAs (eRNAs), small nuclear RNAs (snRNAs), telomerase RNAs and long non-coding RNAs (lncRNAs). INTS15 is part of the integrator tail module that acts as a platform for the recruitment of transcription factors at promoters. Within the integrator complex, INTS15 is required to bridge different integrator modules. The chain is Integrator complex subunit 15 (ints15) from Danio rerio (Zebrafish).